The chain runs to 699 residues: Auxin response factor 10 (699 aa).

3 disordered regions span residues 108–136 (AAEARREEENSRPRPTSFAKTLTQSDANN), 505–533 (TDLTIGSPGKPDDAACSPSSGGKKIDDTK), and 551–595 (KNGN…SWSL). The segment covering 110–119 (EARREEENSR) has biased composition (basic and acidic residues). Positions 125-135 (FAKTLTQSDAN) are enriched in polar residues. The TF-B3 DNA-binding region spans 125–227 (FAKTLTQSDA…NIHVGLRRAK (103 aa)). Residues 570 to 593 (PNTSEGSDSGVTQGSPTKNTTPSW) show a composition bias toward polar residues. A PB1 domain is found at 613 to 693 (PGQCKVFVES…RKLRILTDAG (81 aa)).

Belongs to the ARF family. In terms of assembly, homodimers and heterodimers.

It is found in the nucleus. Its function is as follows. Auxin response factors (ARFs) are transcriptional factors that bind specifically to the DNA sequence 5'-TGTCTC-3' found in the auxin-responsive promoter elements (AuxREs). This chain is Auxin response factor 10 (ARF10), found in Oryza sativa subsp. indica (Rice).